Here is a 254-residue protein sequence, read N- to C-terminus: Diphthine synthase (254 aa).

Residues L11, D87, I90, 115-116 (SV), L167, L208, and H233 each bind S-adenosyl-L-methionine.

Belongs to the diphthine synthase family. In terms of assembly, homodimer.

The catalysed reaction is 2-[(3S)-amino-3-carboxypropyl]-L-histidyl-[translation elongation factor 2] + 3 S-adenosyl-L-methionine = diphthine-[translation elongation factor 2] + 3 S-adenosyl-L-homocysteine + 3 H(+). Its pathway is protein modification; peptidyl-diphthamide biosynthesis. Its function is as follows. S-adenosyl-L-methionine-dependent methyltransferase that catalyzes the trimethylation of the amino group of the modified target histidine residue in translation elongation factor 2 (EF-2), to form an intermediate called diphthine. The three successive methylation reactions represent the second step of diphthamide biosynthesis. The polypeptide is Diphthine synthase (Metallosphaera sedula (strain ATCC 51363 / DSM 5348 / JCM 9185 / NBRC 15509 / TH2)).